Reading from the N-terminus, the 364-residue chain is S-adenosylmethionine:tRNA ribosyltransferase-isomerase (364 aa).

Belongs to the QueA family. Monomer.

The protein localises to the cytoplasm. The catalysed reaction is 7-aminomethyl-7-carbaguanosine(34) in tRNA + S-adenosyl-L-methionine = epoxyqueuosine(34) in tRNA + adenine + L-methionine + 2 H(+). It participates in tRNA modification; tRNA-queuosine biosynthesis. Its function is as follows. Transfers and isomerizes the ribose moiety from AdoMet to the 7-aminomethyl group of 7-deazaguanine (preQ1-tRNA) to give epoxyqueuosine (oQ-tRNA). The sequence is that of S-adenosylmethionine:tRNA ribosyltransferase-isomerase from Lachnoclostridium phytofermentans (strain ATCC 700394 / DSM 18823 / ISDg) (Clostridium phytofermentans).